A 338-amino-acid polypeptide reads, in one-letter code: mRNA decay activator protein ZFP36L1 (338 aa).

The segment at 1 to 111 is necessary and sufficient for the association with mRNA decay enzymes and mRNA decay activation; it reads MTTTLVSATI…QKQPGSGQVN (111 aa). At S54 the chain carries Phosphoserine; by MAPKAPK2. S90 is modified (phosphoserine; by PKB/AKT1). The residue at position 92 (S92) is a Phosphoserine; by PKB/AKT1 and MAPKAPK2. Residues 93–113 form a disordered region; the sequence is EGGERLLPTQKQPGSGQVNSS. Polar residues predominate over residues 101-113; it reads TQKQPGSGQVNSS. C3H1-type zinc fingers lie at residues 114–142 and 152–180; these read RYKTELCRPFEENGACKYGDKCQFAHGIH and KYKTELCRTFHTIGFCPYGPRCHFIHNAE. The necessary for mRNA decay activation stretch occupies residues 185–338; the sequence is LAGGRDLSAD…IFSRLSISDD (154 aa). S203 carries the post-translational modification Phosphoserine; by PKB/AKT1 and MAPKAPK2. The tract at residues 273 to 338 is disordered; that stretch reads SPTTFLFRPM…IFSRLSISDD (66 aa). A compositionally biased stretch (low complexity) spans 305–318; that stretch reads YLSSSSSSHSGSDS. S318 bears the Phosphoserine mark. Phosphoserine; by RPS6KA1 is present on S334.

As to quaternary structure, associates with the cytoplasmic CCR4-NOT deadenylase and RNA exosome complexes to trigger ARE-containing mRNA deadenylation and decay processes. Interacts with CNOT1. Interacts (via N-terminus) with CNOT6. Interacts with CNOT7; this interaction is inhibited in response to phorbol 12-myristate 13-acetate (PMA) treatment in a p38 MAPK-dependent manner. Interacts with DCP1A. Interacts (via N-terminus) with DCP2. Interacts (via N-terminus) with EXOSC2. Interacts with XRN1. Interacts (via phosphorylated form) with YWHAB; this interaction occurs in a protein kinase AKT1-dependent manner. Interacts (via phosphorylated form) with YWHAZ; this interaction occurs in a p38 MAPK- and AKT-signaling pathways. In terms of processing, phosphorylated. Phosphorylated by RPS6KA1 at Ser-334 upon phorbol 12-myristate 13-acetate (PMA) treatment; this phosphorylation results in dissociation of the CCR4-NOT deadenylase complex and induces p38 MAPK-mediated stabilization of the low-density lipoprotein receptor LDLR mRNA. Phosphorylated by protein kinase AKT1 at Ser-92 and Ser-203 in response to insulin; these phosphorylations stabilize ZFP36L1, increase the association with 14-3-3 proteins and mediate ARE-containing mRNA stabilization. AKT1-mediated phosphorylation at Ser-92 does not impair ARE-containing RNA-binding. Phosphorylated at Ser-54, Ser-92 and Ser-203 by MAPKAPK2; these phosphorylations increase the association with 14-3-3 proteins and mediate ARE-containing mRNA stabilization in a protein kinase AKT1-independent manner. MAPKAPK2-mediated phosphorylations at Ser-54, Ser-92 and Ser-203 do not impair ARE-containing RNA-binding. Phosphorylations increase the association with 14-3-3 proteins and mediate ARE-containing mRNA stabilization during early adipogenesis in a p38 MAPK- and AKT-dependent manner. Phosphorylated by protein kinase AKT1 at Ser-92. Ubiquitinated. Ubiquitination leads to proteasomal degradation, a process inhibited by phosphorylations at Ser-90, Ser-92 and Ser-203.

The protein localises to the nucleus. It localises to the cytoplasm. It is found in the cytoplasmic granule. Its subcellular location is the P-body. In terms of biological role, zinc-finger RNA-binding protein that destabilizes several cytoplasmic AU-rich element (ARE)-containing mRNA transcripts by promoting their poly(A) tail removal or deadenylation, and hence provide a mechanism for attenuating protein synthesis. Acts as a 3'-untranslated region (UTR) ARE mRNA-binding adapter protein to communicate signaling events to the mRNA decay machinery. Functions by recruiting the CCR4-NOT deadenylase complex and components of the cytoplasmic RNA decay machinery to the bound ARE-containing mRNAs, and hence promotes ARE-mediated mRNA deadenylation and decay processes. Also induces the degradation of ARE-containing mRNAs even in absence of poly(A) tail. Binds to 3'-UTR ARE of numerous mRNAs. Positively regulates early adipogenesis by promoting ARE-mediated mRNA decay of immediate early genes (IEGs). Promotes ARE-mediated mRNA decay of mineralocorticoid receptor NR3C2 mRNA in response to hypertonic stress. Negatively regulates hematopoietic/erythroid cell differentiation by promoting ARE-mediated mRNA decay of the transcription factor STAT5B mRNA. Positively regulates monocyte/macrophage cell differentiation by promoting ARE-mediated mRNA decay of the cyclin-dependent kinase CDK6 mRNA. Promotes degradation of ARE-containing pluripotency-associated mRNAs in embryonic stem cells (ESCs), such as NANOG, through a fibroblast growth factor (FGF)-induced MAPK-dependent signaling pathway, and hence attenuates ESC self-renewal and positively regulates mesendoderm differentiation. May play a role in mediating pro-apoptotic effects in malignant B-cells by promoting ARE-mediated mRNA decay of BCL2 mRNA. In association with ZFP36L2 maintains quiescence on developing B lymphocytes by promoting ARE-mediated decay of several mRNAs encoding cell cycle regulators that help B cells progress through the cell cycle, and hence ensuring accurate variable-diversity-joining (VDJ) recombination and functional immune cell formation. Together with ZFP36L2 is also necessary for thymocyte development and prevention of T-cell acute lymphoblastic leukemia (T-ALL) transformation by promoting ARE-mediated mRNA decay of the oncogenic transcription factor NOTCH1 mRNA. Participates in the delivery of target ARE-mRNAs to processing bodies (PBs). In addition to its cytosolic mRNA-decay function, plays a role in the regulation of nuclear mRNA 3'-end processing; modulates mRNA 3'-end maturation efficiency of the DLL4 mRNA through binding with an ARE embedded in a weak noncanonical polyadenylation (poly(A)) signal in endothelial cells. Also involved in the regulation of stress granule (SG) and P-body (PB) formation and fusion. Plays a role in vasculogenesis and endocardial development. Plays a role in the regulation of keratinocyte proliferation, differentiation and apoptosis. Plays a role in myoblast cell differentiation. The sequence is that of mRNA decay activator protein ZFP36L1 from Rattus norvegicus (Rat).